A 140-amino-acid chain; its full sequence is Profilin (140 aa).

N-acetylserine is present on S2.

This sequence belongs to the profilin family. Occurs in many kinds of cells as a complex with monomeric actin in a 1:1 ratio.

It localises to the cytoplasm. The protein localises to the cytoskeleton. Its function is as follows. Binds to actin and affects the structure of the cytoskeleton. At high concentrations, profilin prevents the polymerization of actin, whereas it enhances it at low concentrations. By binding to PIP2, it inhibits the formation of IP3 and DG. The protein is Profilin of Clypeaster japonicus (Sand dollar).